The following is a 203-amino-acid chain: LexA repressor (203 aa).

A DNA-binding region (H-T-H motif) is located at residues 30-50 (VREICQAVSLKSTSTVHGHLK). Active-site for autocatalytic cleavage activity residues include Ser127 and Lys164.

The protein belongs to the peptidase S24 family. In terms of assembly, homodimer.

The catalysed reaction is Hydrolysis of Ala-|-Gly bond in repressor LexA.. Its function is as follows. Represses a number of genes involved in the response to DNA damage (SOS response), including recA and lexA. In the presence of single-stranded DNA, RecA interacts with LexA causing an autocatalytic cleavage which disrupts the DNA-binding part of LexA, leading to derepression of the SOS regulon and eventually DNA repair. The sequence is that of LexA repressor from Clostridium perfringens (strain 13 / Type A).